The sequence spans 91 residues: Large ribosomal subunit protein eL43 (91 aa).

Residues 39–60 (CSFCGKEAMKRKATGIWNCAKC) form a C4-type zinc finger.

This sequence belongs to the eukaryotic ribosomal protein eL43 family.

The sequence is that of Large ribosomal subunit protein eL43 from Caenorhabditis elegans.